Reading from the N-terminus, the 302-residue chain is Phosphoribosylaminoimidazole-succinocarboxamide synthase (302 aa).

The protein belongs to the SAICAR synthetase family.

It catalyses the reaction 5-amino-1-(5-phospho-D-ribosyl)imidazole-4-carboxylate + L-aspartate + ATP = (2S)-2-[5-amino-1-(5-phospho-beta-D-ribosyl)imidazole-4-carboxamido]succinate + ADP + phosphate + 2 H(+). Its pathway is purine metabolism; IMP biosynthesis via de novo pathway; 5-amino-1-(5-phospho-D-ribosyl)imidazole-4-carboxamide from 5-amino-1-(5-phospho-D-ribosyl)imidazole-4-carboxylate: step 1/2. This chain is Phosphoribosylaminoimidazole-succinocarboxamide synthase, found in Cupriavidus taiwanensis (strain DSM 17343 / BCRC 17206 / CCUG 44338 / CIP 107171 / LMG 19424 / R1) (Ralstonia taiwanensis (strain LMG 19424)).